We begin with the raw amino-acid sequence, 261 residues long: Zaragozic acid A biosynthesis cluster protein 8 (261 aa).

The segment covering 242-254 (GTRSHTPAATQRR) has biased composition (polar residues). Residues 242 to 261 (GTRSHTPAATQRRGQGRGCG) are disordered.

Its pathway is secondary metabolite biosynthesis. In terms of biological role, part of the gene cluster that mediates the biosynthesis of squalestatin S1 (SQS1, also known as zaragozic acid A), a heavily oxidized fungal polyketide that offers potent cholesterol lowering activity by targeting squalene synthase (SS). SQS1 is composed of a 2,8-dioxobicyclic[3.2.1]octane-3,4,5-tricarboxyclic acid core that is connected to two lipophilic polyketide arms. These initial steps feature the priming of an unusual benzoic acid starter unit onto the highly reducing polyketide synthase clz14, followed by oxaloacetate extension and product release to generate a tricarboxylic acid containing product. The phenylalanine ammonia lyase (PAL) clz10 and the acyl-CoA ligase clz12 are involved in transforming phenylalanine into benzoyl-CoA. The citrate synthase-like protein clz17 is involved in connecting the C-alpha-carbons of the hexaketide chain and oxaloacetate to afford the tricarboxylic acid unit. The potential hydrolytic enzymes, clz11 and clz13, are in close proximity to pks2 and may participate in product release. On the other side, the tetraketide arm is synthesized by a the squalestatin tetraketide synthase clz2 and enzymatically esterified to the core in the last biosynthetic step, by the acetyltransferase clz6. The biosynthesis of the tetraketide must involve 3 rounds of chain extension. After the first and second rounds methyl-transfer occurs, and in all rounds of extension the ketoreductase and dehydratase are active. The enoyl reductase and C-MeT of clz2 are not active in the final round of extension. The acetyltransferase clz6 appears to have a broad substrate selectivity for its acyl CoA substrate, allowing the in vitro synthesis of novel squalestatins. The biosynthesis of SQS1 requires several oxidative steps likely performed by oxidoreductases clz3, clz15 and clz16. Finally, in support of the identification of the cluster as being responsible for SQS1 production, the cluster contains a gene encoding a putative squalene synthase (SS) clz20, suggesting a likely mechanism for self-resistance. The polypeptide is Zaragozic acid A biosynthesis cluster protein 8 (Cochliobolus lunatus (Filamentous fungus)).